The sequence spans 317 residues: Pantothenate kinase (317 aa).

Gly-95–Ser-102 contributes to the ATP binding site.

It belongs to the prokaryotic pantothenate kinase family.

It is found in the cytoplasm. The catalysed reaction is (R)-pantothenate + ATP = (R)-4'-phosphopantothenate + ADP + H(+). It participates in cofactor biosynthesis; coenzyme A biosynthesis; CoA from (R)-pantothenate: step 1/5. The sequence is that of Pantothenate kinase from Myxococcus xanthus (strain DK1622).